A 56-amino-acid polypeptide reads, in one-letter code: Small ribosomal subunit protein uS14 (56 aa).

Zn(2+) contacts are provided by C21, C24, C39, and C42.

This sequence belongs to the universal ribosomal protein uS14 family. As to quaternary structure, component of the 40S small ribosomal subunit. The cofactor is Zn(2+).

Its subcellular location is the cytoplasm. The protein resides in the cytosol. The protein localises to the rough endoplasmic reticulum. The sequence is that of Small ribosomal subunit protein uS14 (RpS29) from Spodoptera frugiperda (Fall armyworm).